The following is a 165-amino-acid chain: V-type proton ATPase 16 kDa proteolipid subunit (165 aa).

Over 1–10 (MSSTFSGDET) the chain is Lumenal. The chain crosses the membrane as a helical span at residues 11–33 (APFFGFLGAAAALVFSCMGAAYG). Residues 34 to 55 (TAKSGVGVASMGVMRPELVMKS) lie on the Cytoplasmic side of the membrane. The chain crosses the membrane as a helical span at residues 56–76 (IVPVVMAGVLGIYGLIIAVII). Over 77 to 95 (STGINPKAKSYYLFDGYAH) the chain is Lumenal. A helical transmembrane segment spans residues 96 to 117 (LSSGLACGLAGLSAGMAIGIVG). Residues 118 to 129 (DAGVRANAQQPK) lie on the Cytoplasmic side of the membrane. Residues 130-155 (LFVGMILILIFAEALALYGLIVGIIL) form a helical membrane-spanning segment. Over 156–165 (SSRAGQSRAD) the chain is Lumenal.

This sequence belongs to the V-ATPase proteolipid subunit family. In terms of assembly, V-ATPase is a heteromultimeric enzyme composed of a peripheral catalytic V1 complex (main components: subunits A, B, C, D, E, and F) attached to an integral membrane V0 proton pore complex (main component: the proteolipid protein; which is present as a hexamer that forms the proton-conducting pore). Higher expression in leaves, followed by roots and weakly in flowers. Expression in leaves is light-dependent.

It is found in the vacuole membrane. Functionally, proton-conducting pore forming subunit of the membrane integral V0 complex of vacuolar ATPase. V-ATPase is responsible for acidifying a variety of intracellular compartments in eukaryotic cells. Necessary for the crassulacean acid metabolism. This chain is V-type proton ATPase 16 kDa proteolipid subunit, found in Kalanchoe daigremontiana (Devil's backbone).